The chain runs to 309 residues: MANSLYQKHIISIAELSRAELELIVKTAGQLKAQPNPELIKHKVVASCFFEPSTRTRLSFETAIQRIGGSVIGFDNGGNTSLAKKGETLADSVRVISSYVDAFVMRHPQEGAARLASEFSNGVPVINAGDGSNQHPSQTLLDLYSIFETQGRLDNLDVAFVGDLKYGRTVHSLAQALAKFDNNRFYFVAPEALAMPDYICEELDEAGVKYQVFSDMESVIPELDILYMTRVQKERFDESEYAHIKSAYILTAAHLSDARSNLKVLHPLPRVDEITTDVDKTPHAYYFEQVENGVYAREALLALVLNESL.

Carbamoyl phosphate contacts are provided by Arg55 and Thr56. Lys85 is a binding site for L-aspartate. Carbamoyl phosphate-binding residues include Arg106, His135, and Gln138. Residues Arg168 and Arg230 each coordinate L-aspartate. Carbamoyl phosphate is bound by residues Leu268 and Pro269.

Belongs to the aspartate/ornithine carbamoyltransferase superfamily. ATCase family. As to quaternary structure, heterododecamer (2C3:3R2) of six catalytic PyrB chains organized as two trimers (C3), and six regulatory PyrI chains organized as three dimers (R2).

The catalysed reaction is carbamoyl phosphate + L-aspartate = N-carbamoyl-L-aspartate + phosphate + H(+). It participates in pyrimidine metabolism; UMP biosynthesis via de novo pathway; (S)-dihydroorotate from bicarbonate: step 2/3. Its function is as follows. Catalyzes the condensation of carbamoyl phosphate and aspartate to form carbamoyl aspartate and inorganic phosphate, the committed step in the de novo pyrimidine nucleotide biosynthesis pathway. In Vibrio cholerae serotype O1 (strain ATCC 39315 / El Tor Inaba N16961), this protein is Aspartate carbamoyltransferase catalytic subunit.